Consider the following 507-residue polypeptide: MAKRKVPPEFVVERDDYKCIRCLACVRVCSYGANFYDENANRVYTENTKCVGCHFCEAICPTEAITVRKNDFDIRPLAHWTPEHLIGIMKQAETGGVLLTSMGNDRPYFSYFDRIVLNASQVTNPSIDPLREPMEIRTYIGRKEEKLEIEEDEDGTVKLKTEIAPQLKLEVPVMFTAMSYGSISLNAILSLARAARTVGTFFNTGEGGLPKELREFKDNMIVQVASGRFGVSADYLNAGSAVEIKIGQGAKPGIGGHLPGEKVTEPISETRMIPVGTDALSPAPHHDIYSIEDLRQLIYAIKEATRYEKPVGVKIAAVHNVAPIAAGAVRAGADYIVIDGIRGGTGAAPKITRDHVGIPIEFAVAVVDQRLREEGIRHMASIVVAGGIRNSADVIKAIALGADAVYIGTAALISLGCHLCQTCYLGKCNWGIATQDPKLTKRLNPEIGARRAANLLRAWAHEIKEILGGMGINAIESLRGNREVLRGVGLHEYELKLLGIKPAGEAW.

2 consecutive 4Fe-4S ferredoxin-type domains span residues 10 to 39 (FVVE…YDEN) and 41 to 70 (NRVY…VRKN). Residues Cys-19, Cys-22, Cys-25, Cys-29, Cys-50, Cys-53, Cys-56, and Cys-60 each contribute to the [4Fe-4S] cluster site.

The protein belongs to the glutamate synthase family. It depends on FMN as a cofactor.

It catalyses the reaction 2 L-glutamate + NADP(+) = L-glutamine + 2-oxoglutarate + NADPH + H(+). The protein is Archaeal-type glutamate synthase [NADPH] of Thermotoga maritima (strain ATCC 43589 / DSM 3109 / JCM 10099 / NBRC 100826 / MSB8).